We begin with the raw amino-acid sequence, 723 residues long: Protein Aster-A (723 aa).

Low complexity predominate over residues 1-18 (MFDTTPHSGRSSPSSSPS). The interval 1–63 (MFDTTPHSGR…SGVSGTLSTQ (63 aa)) is disordered. Residues 28-38 (PSRPPSAPEPE) show a composition bias toward pro residues. A GRAM domain is found at 93-160 (EDFRKLFSKL…KEVTCLKKEK (68 aa)). The tract at residues 257-337 (SPSGAADRSQ…DGPTSNLGPL (81 aa)) is disordered. Ser-265, Ser-269, and Ser-273 each carry phosphoserine. Over residues 302–314 (DSQLDASSSQTVT) the composition is skewed to polar residues. A VASt domain is found at 370 to 541 (SGRLLINSVF…ELAKAEKVSL (172 aa)). A Phosphoserine modification is found at Ser-418. The segment at 562–601 (LSWRGHRDGPQHPDPDPCTQTSMHTSGSLSSRFSEPSVDQ) is disordered. Residues 566 to 576 (GHRDGPQHPDP) are compositionally biased toward basic and acidic residues. The segment covering 579–595 (CTQTSMHTSGSLSSRFS) has biased composition (polar residues). Residues 610–630 (ALVLISIVLIVLIALNALLFY) form a helical membrane-spanning segment.

The protein resides in the endoplasmic reticulum membrane. It localises to the cell membrane. The protein localises to the cytoplasmic vesicle. It is found in the autophagosome. In terms of biological role, cholesterol transporter that mediates non-vesicular transport of cholesterol from the plasma membrane (PM) to the endoplasmic reticulum (ER). Contains unique domains for binding cholesterol and the PM, thereby serving as a molecular bridge for the transfer of cholesterol from the PM to the ER. Plays a crucial role in cholesterol homeostasis and has the unique ability to localize to the PM based on the level of membrane cholesterol. In lipid-poor conditions localizes to the ER membrane and in response to excess cholesterol in the PM is recruited to the endoplasmic reticulum-plasma membrane contact sites (EPCS) which is mediated by the GRAM domain. At the EPCS, the sterol-binding VASt/ASTER domain binds to the cholesterol in the PM and facilitates its transfer from the PM to ER. May play a role in tumor progression. Plays a role in autophagy regulation and is required for biogenesis of the autophagosome. This function in autophagy requires its cholesterol-transfer activity. The sequence is that of Protein Aster-A from Rattus norvegicus (Rat).